Here is a 57-residue protein sequence, read N- to C-terminus: Large ribosomal subunit protein bL32 (57 aa).

The interval methionine 1–lysine 23 is disordered.

It belongs to the bacterial ribosomal protein bL32 family.

In Trichormus variabilis (strain ATCC 29413 / PCC 7937) (Anabaena variabilis), this protein is Large ribosomal subunit protein bL32.